The chain runs to 91 residues: Small ribosomal subunit protein uS19 (91 aa).

Belongs to the universal ribosomal protein uS19 family.

In terms of biological role, protein S19 forms a complex with S13 that binds strongly to the 16S ribosomal RNA. The polypeptide is Small ribosomal subunit protein uS19 (Chromohalobacter salexigens (strain ATCC BAA-138 / DSM 3043 / CIP 106854 / NCIMB 13768 / 1H11)).